We begin with the raw amino-acid sequence, 167 residues long: Translation initiation factor IF-3 (167 aa).

This sequence belongs to the IF-3 family. Monomer.

The protein resides in the cytoplasm. In terms of biological role, IF-3 binds to the 30S ribosomal subunit and shifts the equilibrium between 70S ribosomes and their 50S and 30S subunits in favor of the free subunits, thus enhancing the availability of 30S subunits on which protein synthesis initiation begins. The chain is Translation initiation factor IF-3 from Shouchella clausii (strain KSM-K16) (Alkalihalobacillus clausii).